Consider the following 78-residue polypeptide: Omega-conotoxin-like Ac6.5 (78 aa).

The signal sequence occupies residues 1 to 22; it reads MKLTCVVIVAVLLLTACQLLTA. Residues 23-42 constitute a propeptide that is removed on maturation; that stretch reads DDSRGTQKHRSLRSTTKVSK. Disulfide bonds link C46-C62, C53-C65, and C61-C72. P55 and P67 each carry 4-hydroxyproline.

This sequence belongs to the conotoxin O1 superfamily. In terms of tissue distribution, expressed by the venom duct.

It localises to the secreted. Its function is as follows. Omega-conotoxins act at presynaptic membranes, they bind and block voltage-gated calcium channels (Cav). The polypeptide is Omega-conotoxin-like Ac6.5 (Conus achatinus (Little frog cone)).